Consider the following 434-residue polypeptide: Methyl-coenzyme M reductase subunit beta (434 aa).

Residue tyrosine 365 participates in coenzyme M binding. Coenzyme B is bound at residue glycine 367.

This sequence belongs to the methyl-coenzyme M reductase beta subunit family. As to quaternary structure, MCR is a hexamer of two alpha, two beta, and two gamma chains, forming a dimer of heterotrimers. The cofactor is coenzyme F430.

It is found in the cytoplasm. It carries out the reaction coenzyme B + methyl-coenzyme M = methane + coenzyme M-coenzyme B heterodisulfide. Its pathway is one-carbon metabolism; methyl-coenzyme M reduction; methane from methyl-coenzyme M: step 1/1. In terms of biological role, component of the methyl-coenzyme M reductase (MCR) I that catalyzes the reductive cleavage of methyl-coenzyme M (CoM-S-CH3 or 2-(methylthio)ethanesulfonate) using coenzyme B (CoB or 7-mercaptoheptanoylthreonine phosphate) as reductant which results in the production of methane and the mixed heterodisulfide of CoB and CoM (CoM-S-S-CoB). This is the final step in methanogenesis. In Methanosarcina barkeri (strain Fusaro / DSM 804), this protein is Methyl-coenzyme M reductase subunit beta (mcrB).